The primary structure comprises 395 residues: Synaptotagmin-8 (395 aa).

Residues 1–44 (MQADRSMKMGHVSNPLSTSAPVDATAGPNLIPDLITKIPWPRWI) are Extracellular-facing. Residues 45–65 (LFIAILAAGVLLVSCLLCVIC) traverse the membrane as a helical; Signal-anchor for type III membrane protein segment. The Cytoplasmic segment spans residues 66–395 (YCCHRQRHRK…PRLPLLRPRS (330 aa)). C2 domains follow at residues 113–229 (PWGQ…ESWY) and 241–370 (QMGE…AQWH).

The protein belongs to the synaptotagmin family. As to quaternary structure, homodimer or homooligomer. Homodimerization and homooligomerization do not depend on Ca(2+). Interacts with SYNCRIP isoform 2 C-terminus. Binds inositol 1,3,4,5-tetrakisphosphate (IP4). Binds to AP2 in a Ca(2+)-independent manner. Interacts with STX1A, STX1B and STX2; the interaction is Ca(2+)-dependent. As to expression, ubiquitous. Strongly expressed in heart, kidney, cerebral cortex, pancreas, and many insulin-secreting cells; lower expression in spleen. Broadly distributed in kidney.

It is found in the cell membrane. It localises to the cytoplasmic vesicle. Its subcellular location is the secretory vesicle. The protein resides in the acrosome. In terms of biological role, involved in the trafficking and exocytosis of secretory vesicles in non-neuronal tissues. Mediates Ca(2+)-regulation of exocytosis acrosomal reaction in sperm. May mediate Ca(2+)-regulation of exocytosis in insulin secreted cells. The sequence is that of Synaptotagmin-8 (Syt8) from Rattus norvegicus (Rat).